Consider the following 81-residue polypeptide: Photosystem I iron-sulfur center (81 aa).

4Fe-4S ferredoxin-type domains are found at residues 1 to 31 (MAHSVKIYDTCIGCTQCVRACPTDVLEMVPW) and 39 to 68 (IASAPRTEDCVGCKRCESACPTDYLSVRVY). Residues C11, C14, C17, C21, C48, C51, C54, and C58 each coordinate [4Fe-4S] cluster.

The eukaryotic PSI reaction center is composed of at least 11 subunits. [4Fe-4S] cluster is required as a cofactor.

It is found in the plastid. It localises to the chloroplast thylakoid membrane. The catalysed reaction is reduced [plastocyanin] + hnu + oxidized [2Fe-2S]-[ferredoxin] = oxidized [plastocyanin] + reduced [2Fe-2S]-[ferredoxin]. In terms of biological role, apoprotein for the two 4Fe-4S centers FA and FB of photosystem I (PSI); essential for photochemical activity. FB is the terminal electron acceptor of PSI, donating electrons to ferredoxin. The C-terminus interacts with PsaA/B/D and helps assemble the protein into the PSI complex. Required for binding of PsaD and PsaE to PSI. PSI is a plastocyanin-ferredoxin oxidoreductase, converting photonic excitation into a charge separation, which transfers an electron from the donor P700 chlorophyll pair to the spectroscopically characterized acceptors A0, A1, FX, FA and FB in turn. The sequence is that of Photosystem I iron-sulfur center from Welwitschia mirabilis (Tree tumbo).